Consider the following 465-residue polypeptide: Ribulose bisphosphate carboxylase large chain (465 aa).

Lysine 4 carries the N6,N6,N6-trimethyllysine modification. Residues asparagine 113 and threonine 163 each contribute to the substrate site. Lysine 165 functions as the Proton acceptor in the catalytic mechanism. Lysine 167 is a substrate binding site. The Mg(2+) site is built by lysine 191, aspartate 193, and glutamate 194. Lysine 191 bears the N6-carboxylysine mark. The active-site Proton acceptor is histidine 284. The substrate site is built by arginine 285, histidine 317, and serine 369.

Belongs to the RuBisCO large chain family. Type I subfamily. As to quaternary structure, heterohexadecamer of 8 large chains and 8 small chains; disulfide-linked. The disulfide link is formed within the large subunit homodimers. Mg(2+) is required as a cofactor. In terms of processing, the disulfide bond which can form in the large chain dimeric partners within the hexadecamer appears to be associated with oxidative stress and protein turnover.

Its subcellular location is the plastid. The protein resides in the chloroplast. It catalyses the reaction 2 (2R)-3-phosphoglycerate + 2 H(+) = D-ribulose 1,5-bisphosphate + CO2 + H2O. The enzyme catalyses D-ribulose 1,5-bisphosphate + O2 = 2-phosphoglycolate + (2R)-3-phosphoglycerate + 2 H(+). RuBisCO catalyzes two reactions: the carboxylation of D-ribulose 1,5-bisphosphate, the primary event in carbon dioxide fixation, as well as the oxidative fragmentation of the pentose substrate in the photorespiration process. Both reactions occur simultaneously and in competition at the same active site. The chain is Ribulose bisphosphate carboxylase large chain from Humiria balsamifera (Tauroniro).